Consider the following 376-residue polypeptide: Transmembrane protein 183A (376 aa).

2 disordered regions span residues 1–20 (MARGPGPLGRPRPDTVAMPK) and 100–127 (MDAQEESIHERTVSRKKKSKRHKEELDG). The helical transmembrane segment at 300-320 (LNFIFIPIVMGMIFTLFTINV) threads the bilayer.

Belongs to the TMEM183 family.

It is found in the membrane. This Homo sapiens (Human) protein is Transmembrane protein 183A (TMEM183A).